The sequence spans 486 residues: MTGKRSKTNCRSASHKLFKDKAKNRVDDLQGMLLDLQFARKESRPTDVTLLEEQVNQMLREWKSELNEPSPASSLQQGGTLGSFSSDICRLLQLCDEEDDATSKLAAPKPEPADQNLEAGKAAVFQRGYNLVQGKSEHGLPLVDNCKDLSLAAGNNFDGTAPLEYHQQYDLQQEFEPNFNGGFNNCPSYGVVEGPIHISNFIPTICPPPSAFLGPKCALWDCPRPAQGFDWFQDYCSSFHAALAFNEGPPGMNPVVRPGGIGLKDGLLFAALSAKAGGKDVGIPECEGAATAKSPWNAPELFDLTVLESETLREWLFFDKPRRAFESGNRKQRSLPDYNGRGWHESRKQIMVEFGGLKRSYYMDPQPLHHFEWHLYEYEINKCDACALYRLELKLVDGKKTSKGKVSNDSVADLQKQMGRLTAEFPPENNTTNTTNNNKRCIKGRPKVSTKVATGNVQNTVEQANDYGVGEEFNYLVGNLSDYYIP.

Residues 208–405 (PPSAFLGPKC…VDGKKTSKGK (198 aa)) form a VOZ region. Zn(2+)-binding residues include C217, C222, C236, and H240. Residues 217-240 (CALWDCPRPAQGFDWFQDYCSSFH) form a C3H1-type; atypical zinc finger. The tract at residues 424–445 (EFPPENNTTNTTNNNKRCIKGR) is disordered. Positions 429-438 (NNTTNTTNNN) are enriched in low complexity.

Homodimer. Interacts with phytochrome B (phyB). As to expression, ubiquitous. Expressed in the vascular bundles of various tissues, specifically in the phloem.

Its subcellular location is the cytoplasm. It localises to the nucleus. In terms of biological role, transcriptional activator acting positively in the phytochrome B signaling pathway. Functions redundantly with VOZ2 to promote flowering downstream of phytochrome B (phyB). Down-regulates 'FLOWERING LOCUS C' (FLC) and up-regulates 'FLOWERING LOCUS T' (FT). Binds to the 38-bp cis-acting region of the AVP1 gene. Interacts with phyB in the cytoplasm and is translocated to the nucleus at signal transmission, where it is subjected to degradation in a phytochrome-dependent manner. In Arabidopsis thaliana (Mouse-ear cress), this protein is Transcription factor VOZ1 (VOZ1).